A 161-amino-acid chain; its full sequence is Ethylene-responsive transcription factor ERF070 (161 aa).

The tract at residues M1 to R35 is disordered. Positions K78–G140 form a DNA-binding region, AP2/ERF.

The protein belongs to the AP2/ERF transcription factor family. ERF subfamily.

The protein resides in the nucleus. Probably acts as a transcriptional activator. Binds to the GCC-box pathogenesis-related promoter element. May be involved in the regulation of gene expression by stress factors and by components of stress signal transduction pathways. This chain is Ethylene-responsive transcription factor ERF070 (ERF070), found in Arabidopsis thaliana (Mouse-ear cress).